Consider the following 75-residue polypeptide: Large ribosomal subunit protein bL31 (75 aa).

This sequence belongs to the bacterial ribosomal protein bL31 family. Type A subfamily. Part of the 50S ribosomal subunit.

In terms of biological role, binds the 23S rRNA. The protein is Large ribosomal subunit protein bL31 of Acidiphilium cryptum (strain JF-5).